Reading from the N-terminus, the 630-residue chain is MHTKIHLPPCILLLLLFSLPSFNVVVGGDGESGNPFTPKGYLIRYWKKQISNDLPKPWFLLNKASPLNAAQYATYTKLVADQNALTTQLHTFCSSANLMCAPDLSPSLEKHSGDIHFATYSDKNFTNYGTNEPGIGVNTFKNYSEGENIPVNSFRRYGRGSPRDNKFDNYASDGNVIDQSFNSYSTSTAGGSGKFTNYAANANDPNLHFTSYSDQGTGGVQKFTIYSQEANAGDQYFKSYGKNGNGANGEFVSYGNDTNVIGSTFTNYGQTANGGDQKFTSYGFNGNVPENHFTNYGAGGNGPSETFNSYRDQSNVGDDTFTTYVKDANGGEANFTNYGQSFNEGTDVFTTYGKGGNDPHINFKTYGVNNTFKDYVKDTATFSNYHNKTSQVLASLMEVNGGKKVNNRWVEPGKFFREKMLKSGTIMPMPDIKDKMPKRSFLPRVIASKLPFSTSKIAELKKIFHAGDESQVEKMIGDALSECERAPSAGETKRCVNSAEDMIDFATSVLGRNVVVRTTEDTKGSNGNIMIGSVKGINGGKVTKSVSCHQTLYPYLLYYCHSVPKVRVYEADILDPNSKVKINHGVAICHVDTSSWGPSHGAFVALGSGPGKIEVCHWIFENDMTWAIAD.

The first 27 residues, methionine 1–glycine 27, serve as a signal peptide directing secretion. A propeptide spanning residues glycine 28–leucine 108 is cleaved from the precursor. Asparagine 124, asparagine 142, asparagine 256, asparagine 334, asparagine 369, and asparagine 387 each carry an N-linked (GlcNAc...) asparagine glycan. A propeptide spanning residues glutamate 398–aspartate 630 is cleaved from the precursor. In terms of domain architecture, BURP spans phenylalanine 415–alanine 629.

In terms of assembly, interacts with polygalacturonase-2 (isoenzymes PG2A and PG2B) to form heterodimers called polygalacturonase-1 (PG1). As to expression, mostly expressed in fruit pericarp. Also detected at low levels in cell wall of roots, leaves and flowers (at protein level).

The protein resides in the secreted. Its subcellular location is the extracellular space. The protein localises to the apoplast. It localises to the cell wall. In terms of biological role, non-catalytic subunit of the polygalacturonase isozyme 1 (PG1). Necessary and sufficient to convert the polygalacturonase from its monomeric form PG2 to its heterodimeric form PG1. Seems to limit the depolymerization and solubilization of cell wall polyuronides mediated by PG2 during ripening, probably by recruiting PG2 to form PG1. The polypeptide is Polygalacturonase-1 non-catalytic subunit beta (GP1) (Solanum lycopersicum (Tomato)).